We begin with the raw amino-acid sequence, 109 residues long: Flagellar hook-basal body complex protein FliE (109 aa).

This sequence belongs to the FliE family.

The protein resides in the bacterial flagellum basal body. This chain is Flagellar hook-basal body complex protein FliE, found in Pseudomonas savastanoi pv. phaseolicola (strain 1448A / Race 6) (Pseudomonas syringae pv. phaseolicola (strain 1448A / Race 6)).